We begin with the raw amino-acid sequence, 220 residues long: MGLVFRTATQAAALLLSLLGWVLSCLTNYLPHWKNLNLELNEMENWTMGLWKSCVIQEEVGRQCKDFDSFLALPAELQVSRVLMSLCNGLGLLGLLASGCGLDCLRLGETQEGLKKRLLTLGGTLLWTSGVMVLVPVSWVAHKTVREFWDETMPEIVPRWEFGEALFLGWFAGFCLVLGGCVLHCAACWSPAPAASSHYAVAGPRDHQQHLELKQANPEI.

Residues 1-10 (MGLVFRTATQ) lie on the Cytoplasmic side of the membrane. The helical transmembrane segment at 11–31 (AAALLLSLLGWVLSCLTNYLP) threads the bilayer. Residues 32-81 (HWKNLNLELNEMENWTMGLWKSCVIQEEVGRQCKDFDSFLALPAELQVSR) are Extracellular-facing. A helical transmembrane segment spans residues 82 to 102 (VLMSLCNGLGLLGLLASGCGL). Over 103 to 120 (DCLRLGETQEGLKKRLLT) the chain is Cytoplasmic. The helical transmembrane segment at 121–141 (LGGTLLWTSGVMVLVPVSWVA) threads the bilayer. The Extracellular portion of the chain corresponds to 142-164 (HKTVREFWDETMPEIVPRWEFGE). Residues 165 to 185 (ALFLGWFAGFCLVLGGCVLHC) traverse the membrane as a helical segment. At 186 to 220 (AACWSPAPAASSHYAVAGPRDHQQHLELKQANPEI) the chain is on the cytoplasmic side.

Belongs to the claudin family.

The protein resides in the cell junction. It is found in the tight junction. The protein localises to the cell membrane. In terms of biological role, plays a major role in tight junction-specific obliteration of the intercellular space, through calcium-independent cell-adhesion activity. This Mus musculus (Mouse) protein is Claudin-22 (Cldn22).